A 451-amino-acid polypeptide reads, in one-letter code: tRNA(Ile)-lysidine synthase (451 aa).

21–26 (SGGLDS) is a binding site for ATP.

It belongs to the tRNA(Ile)-lysidine synthase family.

It localises to the cytoplasm. The catalysed reaction is cytidine(34) in tRNA(Ile2) + L-lysine + ATP = lysidine(34) in tRNA(Ile2) + AMP + diphosphate + H(+). Its function is as follows. Ligates lysine onto the cytidine present at position 34 of the AUA codon-specific tRNA(Ile) that contains the anticodon CAU, in an ATP-dependent manner. Cytidine is converted to lysidine, thus changing the amino acid specificity of the tRNA from methionine to isoleucine. The polypeptide is tRNA(Ile)-lysidine synthase (Yersinia pseudotuberculosis serotype O:1b (strain IP 31758)).